A 498-amino-acid chain; its full sequence is Cytotardin (498 aa).

The coil 1A stretch occupies residues 18 to 58 (DRVHSKDELQALNTRLAKYIDKIRNLENENVALQRQLQTAE). The region spanning 22–378 (SKDELQALNT…KLLSGEEQRL (357 aa)) is the IF rod domain. Positions 59 to 69 (QTTVTEIHRVS) are linker 1. The interval 70–213 (KNYDEELAKL…ENLREEKSQR (144 aa)) is coil 1B. Positions 214-231 (QYLLHDLQRGLQDEFESK) are linker 2. The interval 232–371 (LVQQLNELRA…AELATYNKLL (140 aa)) is coil 2. Positions 381 to 425 (DGSGTVIRRPTGGATGTGSGIYGGTGSGGYSRDIGSTTTTKTTYT) are disordered. The span at 393 to 409 (GATGTGSGIYGGTGSGG) shows a compositional bias: gly residues.

Belongs to the intermediate filament family.

It is found in the cytoplasm. The protein resides in the cell cortex. In terms of biological role, intermediate filament (IF) protein that forms both short filaments and extensive cytoskeletal networks which most likely are homomeric. Some of the cytotardin arrays display cage-like perinuclear structures, while others are located in the periphery close to the cell membrane. The entire tardigrade body is ensheathed by a grid of belt-like filaments formed by the cytotardin protein, which retain their integrity even in contracted specimens. The belt-like structures encircling each epidermal cell might help to resist the shearing forces that arise during freezing and thawing cycles, whereas the dense meshwork at the basis of each claw and around the stylets might provide the tissue stability necessary for locomotion and feeding. The polypeptide is Cytotardin (Hypsibius exemplaris (Freshwater tardigrade)).